Here is a 356-residue protein sequence, read N- to C-terminus: Cysteine proteinase 3 (356 aa).

The signal sequence occupies residues 1 to 16 (MSRLSLVLILVAGLFA). The propeptide at 17-138 (TALAGPATFA…KGNLKLTNVV (122 aa)) is activation peptide. Asparagine 123 is a glycosylation site (N-linked (GlcNAc...) asparagine). 2 disulfides stabilise this stretch: cysteine 160/cysteine 203 and cysteine 194/cysteine 236. Residue cysteine 163 is part of the active site. The N-linked (GlcNAc...) asparagine glycan is linked to asparagine 252. Cysteine 294 and cysteine 344 are joined by a disulfide. Active-site residues include histidine 303 and asparagine 323.

Belongs to the peptidase C1 family. Predominantly expressed in stem and root.

Its subcellular location is the vacuole. The chain is Cysteine proteinase 3 (CYP-3) from Solanum lycopersicum (Tomato).